The sequence spans 1500 residues: Host cell factor (1500 aa).

5 Kelch repeats span residues 85-133, 135-181, 189-237, 259-307, and 308-373; these read LMVV…VEGT, MFVF…RLGH, KIFL…TYGD, NLLI…MIGN, and KMYV…GIQS. Serine 477 carries the post-translational modification Phosphoserine. Residues 517–528 are compositionally biased toward polar residues; that stretch reads LLQSMSQPSSPA. The tract at residues 517-543 is disordered; sequence LLQSMSQPSSPASRADKDPLSSGGGTT. Phosphoserine occurs at positions 958 and 966. Residues 1024 to 1061 are disordered; it reads SEGQHGSEENENNGENATSSSASALFTGGDTAGPSRAQ. The span at 1036-1047 shows a compositional bias: low complexity; sequence NGENATSSSASA. A Phosphothreonine modification is found at threonine 1126. A disordered region spans residues 1161-1185; that stretch reads IGSLKENQDENKKFKQRQESSPSQN. A compositionally biased stretch (basic and acidic residues) spans 1166 to 1178; the sequence is ENQDENKKFKQRQ. Fibronectin type-III domains are found at residues 1244-1341 and 1346-1457; these read VQST…TCLP and APSA…DPAA. The segment at 1458-1500 is disordered; it reads AKQHTPTVTPNLKRGPEKSTIGSSNIANTFCSPHKRGRNGLHD. Positions 1470–1495 match the Bipartite nuclear localization signal motif; the sequence is KRGPEKSTIGSSNIANTFCSPHKRGR. The span at 1477-1488 shows a compositional bias: polar residues; the sequence is TIGSSNIANTFC. Residue serine 1489 is modified to Phosphoserine. The segment covering 1490 to 1500 has biased composition (basic residues); it reads PHKRGRNGLHD.

In terms of assembly, core component of several methyltransferase-containing complexes. Component of the SET1 complex, composed at least of the catalytic subunit Set1, wds/WDR5, Wdr82, Rbbp5, ash2, Cfp1/CXXC1, hcf and Dpy-30L1. Component of the MLL3/4 complex composed at least of the catalytic subunit trr, ash2, Rbbp5, Dpy-30L1, wds, hcf, ptip, Pa1, Utx, Lpt and Ncoa6. Component of the Ada2a-containing (ATAC) complex composed of at least Ada2a, Atac1, Hcf, Ada3, Gcn5, Mocs2B, Charac-14, Atac3, Atac2, NC2beta and wds. Proteolytic cleavage occurs between amino acids 900 and 1100 within the non-conserved central region, giving rise to two independent but tightly associated N- and C-terminal subunits.

Its subcellular location is the nucleus. Functionally, may be involved in control of the cell cycle. The polypeptide is Host cell factor (Drosophila melanogaster (Fruit fly)).